The sequence spans 768 residues: Pentatricopeptide repeat-containing protein At3g53360, mitochondrial (768 aa).

A mitochondrion-targeting transit peptide spans 1-70; it reads MATMLRLGAR…SSFKIRLRTY (70 aa). PPR repeat units follow at residues 30–60, 66–100, 101–131, 132–166, 167–201, 202–232, 233–267, 269–303, 304–334, 335–369, 370–404, 405–435, 437–471, 472–506, 507–537, 538–572, 573–608, and 609–639; these read TEELMNDHINSLCKSNFYREALEAFDFAQKN, RLRTYISLICACSSSRSLAQGRKIHDHILNSNCKY, DTILNNHILSMYGKCGSLRDAREVFDFMPER, NLVSYTSVITGYSQNGQGAEAIRLYLKMLQEDLVP, DQFAFGSIIKACASSSDVGLGKQLHAQVIKLESSS, HLIAQNALIAMYVRFNQMSDASRVFYGIPMK, DLISWSSIIAGFSQLGFEFEALSHLKEMLSFGVFH, NEYIFGSSLKACSSLLRPDYGSQIHGLCIKSELAG, NAIAGCSLCDMYARCGFLNSARRVFDQIERP, DTASWNVIIAGLANNGYADEAVSVFSQMRSSGFIP, DAISLRSLLCAQTKPMALSQGMQIHSYIIKWGFLA, DLTVCNSLLTMYTFCSDLYCCFNLFEDFRNN, DSVSWNTILTACLQHEQPVEMLRLFKLMLVSECEP, DHITMGNLLRGCVEISSLKLGSQVHCYSLKTGLAP, EQFIKNGLIDMYAKCGSLGQARRIFDSMDNR, DVVSWSTLIVGYAQSGFGEEALILFKEMKSAGIEP, NHVTFVGVLTACSHVGLVEEGLKLYATMQTEHGISP, and TKEHCSCVVDLLARAGRLNEAERFIDEMKLE. The tract at residues 644–719 is type E motif; sequence VWKTLLSACK…IPGQSWIEIE (76 aa). Residues 720 to 750 are type E(+) motif; that stretch reads DKIHIFFAEDIFHPERDDIYTVLHNIWSQML.

The protein belongs to the PPR family. PCMP-E subfamily.

It localises to the mitochondrion. This chain is Pentatricopeptide repeat-containing protein At3g53360, mitochondrial (PCMP-E86), found in Arabidopsis thaliana (Mouse-ear cress).